We begin with the raw amino-acid sequence, 631 residues long: Phosphomethylpyrimidine synthase (631 aa).

Residues N239, M268, Y297, H333, 353 to 355 (SRG), 394 to 397 (DGLR), and E433 contribute to the substrate site. Residue H437 participates in Zn(2+) binding. Y460 provides a ligand contact to substrate. Position 501 (H501) interacts with Zn(2+). [4Fe-4S] cluster is bound by residues C581, C584, and C589.

This sequence belongs to the ThiC family. Homodimer. Requires [4Fe-4S] cluster as cofactor.

It catalyses the reaction 5-amino-1-(5-phospho-beta-D-ribosyl)imidazole + S-adenosyl-L-methionine = 4-amino-2-methyl-5-(phosphooxymethyl)pyrimidine + CO + 5'-deoxyadenosine + formate + L-methionine + 3 H(+). Its pathway is cofactor biosynthesis; thiamine diphosphate biosynthesis. In terms of biological role, catalyzes the synthesis of the hydroxymethylpyrimidine phosphate (HMP-P) moiety of thiamine from aminoimidazole ribotide (AIR) in a radical S-adenosyl-L-methionine (SAM)-dependent reaction. This chain is Phosphomethylpyrimidine synthase, found in Salmonella gallinarum (strain 287/91 / NCTC 13346).